We begin with the raw amino-acid sequence, 478 residues long: Ninja-family protein 8 (478 aa).

Disordered regions lie at residues 1 to 247, 337 to 374, and 454 to 478; these read MDDD…LTPG, FTAK…EKKA, and DAPA…SAEN. Basic and acidic residues predominate over residues 23 to 35; it reads KARDAPLEPKAEP. Over residues 169 to 179 the composition is skewed to polar residues; that stretch reads ISISTDDGSTG. Acidic residues predominate over residues 180–189; that stretch reads ENEDVAESEA. Residues 233-242 show a composition bias toward low complexity; it reads SFSGSESSSG. Residues 339-358 show a composition bias toward basic and acidic residues; that stretch reads AKDKADQTGTKQVDDGKKPQ.

Belongs to the Ninja family.

Its subcellular location is the nucleus. The sequence is that of Ninja-family protein 8 from Zea mays (Maize).